The sequence spans 425 residues: UPF0229 protein SG1344 (425 aa).

The interval 49–109 (GESVSIPNTD…GQGSVSQDGE (61 aa)) is disordered. The segment covering 50-59 (ESVSIPNTDI) has biased composition (polar residues). Residues 77 to 90 (PGNDHFVQNDRIER) show a composition bias toward basic and acidic residues.

The protein belongs to the UPF0229 family.

The chain is UPF0229 protein SG1344 from Sodalis glossinidius (strain morsitans).